Here is a 560-residue protein sequence, read N- to C-terminus: Transcription termination factor 5, mitochondrial (560 aa).

The N-terminal 23 residues, 1-23, are a transit peptide targeting the mitochondrion; sequence MLRNGQNQAQLLARSLGQLARGM. The segment at 23–47 is disordered; it reads MASSKRVSSKKEDLKPKLPKPPTVE.

Belongs to the mTERF family. Probably binds to the mTTF-DNA complex.

Its subcellular location is the mitochondrion. Functionally, binds promoter DNA and regulates initiation of transcription. Regulates mitochondrial replication and transcription. Required for normal topology and maintenance of mitochondrial DNA (mtDNA) levels. Regulates mtDNA replication by re-activating replication after replication pausing. Likely to regulate replication pausing by coordinating with the mitochondrial termination factor mTTF which promotes replication pausing. Their function in replication pausing prevents unregulated replication that may occur for example by collisions between the machineries of DNA replication and transcription during mtDNA synthesis. This ensures the incorporation of RNA transcripts into replication intermediates at the replication fork and allows for proper fork progression. Possibly functions downstream of Dref which activates genes involved in mtDNA replication and maintenance. The chain is Transcription termination factor 5, mitochondrial from Drosophila melanogaster (Fruit fly).